Here is a 172-residue protein sequence, read N- to C-terminus: MDLHHYVQDIPDFPKPGILFRDISPMLRDPVGWAEVMDRLGVLCDSLKPDLIVGIEARGFIVGMGLATHKKLGFVPVRKPGKLPGKVYGIDYALEYGTDRLEIHADAMRGQPRILVVDDLLATGGTASATADLVKQAGGQLVGCAFIVELTELKGRGRLPGDIQVESLIHYS.

It belongs to the purine/pyrimidine phosphoribosyltransferase family. In terms of assembly, homodimer.

Its subcellular location is the cytoplasm. It carries out the reaction AMP + diphosphate = 5-phospho-alpha-D-ribose 1-diphosphate + adenine. It participates in purine metabolism; AMP biosynthesis via salvage pathway; AMP from adenine: step 1/1. Catalyzes a salvage reaction resulting in the formation of AMP, that is energically less costly than de novo synthesis. The polypeptide is Adenine phosphoribosyltransferase (Synechococcus sp. (strain CC9311)).